The following is a 99-amino-acid chain: Co-chaperonin GroES (99 aa).

The protein belongs to the GroES chaperonin family. In terms of assembly, heptamer of 7 subunits arranged in a ring. Interacts with the chaperonin GroEL.

Its subcellular location is the cytoplasm. Together with the chaperonin GroEL, plays an essential role in assisting protein folding. The GroEL-GroES system forms a nano-cage that allows encapsulation of the non-native substrate proteins and provides a physical environment optimized to promote and accelerate protein folding. GroES binds to the apical surface of the GroEL ring, thereby capping the opening of the GroEL channel. The polypeptide is Co-chaperonin GroES (Corynebacterium glutamicum (strain R)).